The following is a 118-amino-acid chain: Large ribosomal subunit protein bL20 (118 aa).

Belongs to the bacterial ribosomal protein bL20 family.

Functionally, binds directly to 23S ribosomal RNA and is necessary for the in vitro assembly process of the 50S ribosomal subunit. It is not involved in the protein synthesizing functions of that subunit. The sequence is that of Large ribosomal subunit protein bL20 from Hydrogenovibrio crunogenus (strain DSM 25203 / XCL-2) (Thiomicrospira crunogena).